The primary structure comprises 446 residues: Adenylosuccinate synthetase (446 aa).

GTP is bound by residues 12-18 and 40-42; these read GDEGKGK and GHT. Catalysis depends on Asp13, which acts as the Proton acceptor. Mg(2+) contacts are provided by Asp13 and Gly40. IMP is bound by residues 13 to 16, 38 to 41, Thr128, Arg142, Gln223, Thr238, and Arg302; these read DEGK and NAGH. His41 (proton donor) is an active-site residue. 298-304 serves as a coordination point for substrate; it reads TTTGRRR. GTP is bound by residues Arg304, 330–332, and 412–414; these read KLD and SLG.

This sequence belongs to the adenylosuccinate synthetase family. Homodimer. The cofactor is Mg(2+).

Its subcellular location is the cytoplasm. The enzyme catalyses IMP + L-aspartate + GTP = N(6)-(1,2-dicarboxyethyl)-AMP + GDP + phosphate + 2 H(+). It participates in purine metabolism; AMP biosynthesis via de novo pathway; AMP from IMP: step 1/2. Its function is as follows. Plays an important role in the de novo pathway of purine nucleotide biosynthesis. Catalyzes the first committed step in the biosynthesis of AMP from IMP. The chain is Adenylosuccinate synthetase from Crocosphaera subtropica (strain ATCC 51142 / BH68) (Cyanothece sp. (strain ATCC 51142)).